The sequence spans 333 residues: Forkhead box protein unc-130 (333 aa).

The segment at 1 to 126 (MLFSMESILS…MSGHRKSSHA (126 aa)) is disordered. Residues 14–24 (PKLEPPPKLEP) show a composition bias toward basic and acidic residues. The segment covering 37–50 (RSNTRLSEPSTSAS) has biased composition (polar residues). Residues 52–62 (LEHDLKFGESR) are compositionally biased toward basic and acidic residues. Positions 98–110 (SSDDAKDDDDDDD) are enriched in acidic residues. The segment at residues 127-221 (KPPYSYIALI…DNGSFLRRRK (95 aa)) is a DNA-binding region (fork-head). A disordered region spans residues 304 to 333 (APVSSGQKRTSSSSSPNENGSSAVSDKLSA). Low complexity predominate over residues 307-333 (SSGQKRTSSSSSPNENGSSAVSDKLSA).

Expressed in ventral body wall muscle. Expressed in the structural cells and two neurons of each ray in the male tail.

The protein resides in the nucleus. Functionally, probable transcription factor. Binds to DNA sequence motif 5'-CTGTTTCA-3'. Required for the migration of distal tip cells (DTC) and axonal growth-cones along the dorsal-ventral axis of the body wall, acting by cell autonomous repression of unc-129/TGF-beta expression in ventral body muscle during embyogenesis. Binds to the promoter region of the unc-129 gene. Plays a role in dorsal-ventral patterning and fate specification of the postembryonic mesoderm. Involved in male tail morphogenesis and in embryogenesis. Plays a role in the development of sensory neurons and is required to repress AWA fate and promote ASG fate in the ASG chemosensory neurons. Regulates expression of a class of small RNAs, known as 21U-RNAs. The polypeptide is Forkhead box protein unc-130 (Caenorhabditis elegans).